Consider the following 362-residue polypeptide: Solute carrier family 25 member 3 (362 aa).

A mitochondrion-targeting transit peptide spans 1-49 (MFSSVAHLARANPFNTPHLQLVHDGLGDLRSSSPGPTGQPRRPRNLAAA). Residues 50–63 (AVEEQYSCDYGSGR) lie on the Mitochondrial intermembrane side of the membrane. Solcar repeat units lie at residues 63-147 (RFFI…FKVL), 160-244 (WRTS…TVEA), and 261-339 (EQLV…VKVY). A helical transmembrane segment spans residues 64–86 (FFILCGLGGIISCGTTHTALVPL). Over 87–121 (DLVKCRMQVDPQKYKGIFNGFSVTLKEDGVRGLAK) the chain is Mitochondrial matrix. The residue at position 99 (Lys99) is an N6-acetyllysine. Residue Lys112 is modified to N6-methyllysine. The chain crosses the membrane as a helical span at residues 122–141 (GWAPTFLGYSMQGLCKFGFY). Residues 142–161 (EVFKVLYSNMLGEENTYLWR) lie on the Mitochondrial intermembrane side of the membrane. A helical membrane pass occupies residues 162–183 (TSLYLAASASAEFFADIALAPM). The Mitochondrial matrix portion of the chain corresponds to 184–218 (EAAKVRIQTQPGYANTLRDAAPKMYKEEGLKAFYK). At Tyr196 the chain carries Phosphotyrosine. Lys209 carries the N6-acetyllysine modification. Residues 219 to 238 (GVAPLWMRQIPYTMMKFACF) traverse the membrane as a helical segment. Over 239 to 261 (ERTVEALYKFVVPKPRSECSKPE) the chain is Mitochondrial intermembrane. The helical transmembrane segment at 262–284 (QLVVTFVAGYIAGVFCAIVSHPA) threads the bilayer. Topologically, residues 285–314 (DSVVSVLNKEKGSSASLVLKRLGFKGVWKG) are mitochondrial matrix. Residues 315 to 333 (LFARIIMIGTLTALQWFIY) traverse the membrane as a helical segment. Residues 334–362 (DSVKVYFRLPRPPPPEMPESLKKKLGLTQ) lie on the Mitochondrial intermembrane side of the membrane.

It belongs to the mitochondrial carrier (TC 2.A.29) family. Interacts with PPIF; the interaction is impaired by CsA.

It is found in the mitochondrion inner membrane. The catalysed reaction is phosphate(in) + H(+)(in) = phosphate(out) + H(+)(out). Inorganic ion transporter that transports phosphate or copper ions across the mitochondrial inner membrane into the matrix compartment. Mediates proton-coupled symport of phosphate ions necessary for mitochondrial oxidative phosphorylation of ADP to ATP. Transports copper ions probably in the form of anionic copper(I) complexes to maintain mitochondrial matrix copper pool and to supply copper for cytochrome C oxidase complex assembly. May also play a role in regulation of the mitochondrial permeability transition pore (mPTP). The chain is Solute carrier family 25 member 3 from Homo sapiens (Human).